The sequence spans 620 residues: Glutathione-regulated potassium-efflux system protein KefC (620 aa).

Helical transmembrane passes span His-4–Val-24, Leu-26–Leu-46, Ser-54–Leu-74, Gly-90–Leu-110, Val-114–Met-134, Phe-149–Leu-169, Met-178–Leu-198, Val-218–Gly-238, Gly-270–Leu-290, Leu-294–Ile-314, Trp-327–Gln-347, and Ser-359–Asn-379. Residues Gln-399–Thr-518 enclose the RCK N-terminal domain. The tract at residues Gly-597–Ser-620 is disordered.

This sequence belongs to the monovalent cation:proton antiporter 2 (CPA2) transporter (TC 2.A.37) family. KefC subfamily. Homodimer. Interacts with the regulatory subunit KefF.

The protein localises to the cell inner membrane. Its function is as follows. Pore-forming subunit of a potassium efflux system that confers protection against electrophiles. Catalyzes K(+)/H(+) antiport. The chain is Glutathione-regulated potassium-efflux system protein KefC from Escherichia fergusonii (strain ATCC 35469 / DSM 13698 / CCUG 18766 / IAM 14443 / JCM 21226 / LMG 7866 / NBRC 102419 / NCTC 12128 / CDC 0568-73).